The chain runs to 88 residues: Small ribosomal subunit protein bS20 (88 aa).

This sequence belongs to the bacterial ribosomal protein bS20 family.

In terms of biological role, binds directly to 16S ribosomal RNA. This Bartonella tribocorum (strain CIP 105476 / IBS 506) protein is Small ribosomal subunit protein bS20.